The sequence spans 2345 residues: Acetyl-CoA carboxylase 1 (2345 aa).

N-acetylmethionine is present on Met1. Phosphoserine is present on residues Ser5, Ser23, Ser25, Ser29, Ser34, Ser47, Ser49, and Ser52. Residue Thr57 is modified to Phosphothreonine. 2 positions are modified to phosphoserine: Ser77 and Ser79. Position 79 is a phosphoserine; by AMPK (Ser79). The 502-residue stretch at 116 to 617 (VIEKVLIANN…DTGWLDRLIA (502 aa)) folds into the Biotin carboxylation domain. Residues 274 to 465 (SKRILNVPQD…LPAAQLQIAM (192 aa)) form the ATP-grasp domain. Position 300–357 (300–357 (AEEVGYPVMIKASEGGGGKGIRKVNNADDFPNLFRQVQAEVPGSPIFVMRLAKQSRHL)) interacts with ATP. Residues Glu423, Glu436, and Asn438 each coordinate Mg(2+). Residues Glu423, Glu436, and Asn438 each coordinate Mn(2+). Arg440 is a catalytic residue. Thr609 bears the Phosphothreonine mark. The 75-residue stretch at 744 to 818 (FEKENDPSVM…DPGCVIAKMQ (75 aa)) folds into the Biotinyl-binding domain. Lys785 is subject to N6-biotinyllysine. Phosphoserine is present on residues Ser834, Ser1200, Ser1215, and Ser1217. Thr1226 carries the post-translational modification Phosphothreonine. Residues Ser1258, Ser1262, and Ser1272 each carry the phosphoserine modification. Residue Lys1333 is modified to N6-acetyllysine. One can recognise a CoA carboxyltransferase N-terminal domain in the interval 1575-1913 (PYVTKDLLQS…SVHSSVPLLN (339 aa)). A carboxyltransferase region spans residues 1575–2233 (PYVTKDLLQS…EDLVKKKIHN (659 aa)). 3 residues coordinate CoA: Arg1822, Lys2126, and Arg2128. In terms of domain architecture, CoA carboxyltransferase C-terminal spans 1917–2233 (PIDRIIEFVP…EDLVKKKIHN (317 aa)). Thr2152 bears the Phosphothreonine mark.

As to quaternary structure, monomer, homodimer, and homotetramer. Can form filamentous polymers. Interacts in its inactive phosphorylated form with the BRCT domains of BRCA1 which prevents ACACA dephosphorylation and inhibits lipid synthesis. Interacts with MID1IP1; interaction with MID1IP1 promotes oligomerization and increases its activity. Requires Mg(2+) as cofactor. It depends on Mn(2+) as a cofactor. Biotin is required as a cofactor. In terms of processing, phosphorylation on Ser-1262 is required for interaction with BRCA1. Post-translationally, phosphorylation at Ser-79 by AMPK inactivates enzyme activity. The biotin cofactor is covalently attached to the central biotinyl-binding domain and is required for the catalytic activity.

The protein localises to the cytoplasm. The protein resides in the cytosol. It catalyses the reaction hydrogencarbonate + acetyl-CoA + ATP = malonyl-CoA + ADP + phosphate + H(+). The protein operates within lipid metabolism; malonyl-CoA biosynthesis; malonyl-CoA from acetyl-CoA: step 1/1. Its activity is regulated as follows. Inhibited by phosphorylation. Citrate promotes oligomerization of the protein into filaments that correspond to the most active form of the carboxylase. Cytosolic enzyme that catalyzes the carboxylation of acetyl-CoA to malonyl-CoA, the first and rate-limiting step of de novo fatty acid biosynthesis. This is a 2 steps reaction starting with the ATP-dependent carboxylation of the biotin carried by the biotin carboxyl carrier (BCC) domain followed by the transfer of the carboxyl group from carboxylated biotin to acetyl-CoA. This is Acetyl-CoA carboxylase 1 from Mus musculus (Mouse).